The sequence spans 184 residues: Acyl-homoserine-lactone synthase (184 aa).

Belongs to the autoinducer synthase family.

It catalyses the reaction a fatty acyl-[ACP] + S-adenosyl-L-methionine = an N-acyl-L-homoserine lactone + S-methyl-5'-thioadenosine + holo-[ACP] + H(+). Involved in the synthesis of the acyl-homoserine lactone (AHL) signal N-(3-hydroxydodecanoyl)-L-HSL (3-hydroxy-C(12)-HSL or OH-dDHL). Required for normal biofilm development. This is Acyl-homoserine-lactone synthase from Acinetobacter baumannii.